The primary structure comprises 360 residues: MKLVFRWFGEKHDTVTLEQIRQIPGVEGVVGALFDIPVGEVWPLEEIMKLKETVERAGLKLEVIESVNVHEDIKLGLPTRDRYIENYKETIRNLAKAGVKVVCYNFMPVFDWMRTDLHKKLPDGSETMEYDHSLIEGVTPDELIERVKEGSEGFVLPGWEWDRLEKLRETFELYKNVDEEKLFENLVYFLERVIPVCEECDVKLAIHPDDPPWSIFGLPRIITNKENIERLLKAVDSPYNGITLCMGSLGANPENNIPEMIRYFGKMGRIHFAHVRNLKFTGEKSFYETAHPSFCGSHDLFEVMKAFHDIGYEGYIRPDHGRLIWGEKARPGYGLYDRALGATYILGLWEAISKMKERYC.

It belongs to the mannonate dehydratase family. Fe(2+) serves as cofactor. The cofactor is Mn(2+).

The catalysed reaction is D-mannonate = 2-dehydro-3-deoxy-D-gluconate + H2O. Its pathway is carbohydrate metabolism; pentose and glucuronate interconversion. Functionally, catalyzes the dehydration of D-mannonate. The sequence is that of Mannonate dehydratase (uxuA) from Thermotoga neapolitana.